The sequence spans 80 residues: RNA-binding protein Hfq (80 aa).

The region spanning 10-70 (DLFLNTVRKQ…ISTIMPGQPL (61 aa)) is the Sm domain.

This sequence belongs to the Hfq family. Homohexamer.

RNA chaperone that binds small regulatory RNA (sRNAs) and mRNAs to facilitate mRNA translational regulation in response to envelope stress, environmental stress and changes in metabolite concentrations. Also binds with high specificity to tRNAs. This is RNA-binding protein Hfq from Rhizobium meliloti (strain 1021) (Ensifer meliloti).